A 132-amino-acid chain; its full sequence is Small ribosomal subunit protein uS8 (132 aa).

It belongs to the universal ribosomal protein uS8 family. In terms of assembly, part of the 30S ribosomal subunit. Contacts proteins S5 and S12.

In terms of biological role, one of the primary rRNA binding proteins, it binds directly to 16S rRNA central domain where it helps coordinate assembly of the platform of the 30S subunit. In Clostridium botulinum (strain Alaska E43 / Type E3), this protein is Small ribosomal subunit protein uS8.